We begin with the raw amino-acid sequence, 579 residues long: Insulin-like growth factor 2 mRNA-binding protein 3 (579 aa).

RRM domains lie at 2 to 75 and 81 to 156; these read NKLY…HSVP and RKLQ…YIPD. Residues 158–192 form a disordered region; sequence TAAQQNPSPQLRGRRGPGQRGSSRQASPGSVSKQK. The residue at position 165 (Ser-165) is a Phosphoserine. Residue Ser-184 is modified to Phosphoserine; by MTOR. KH domains are found at residues 195 to 260, 276 to 343, and 405 to 470; these read DLPL…CKSI, EIPL…EEEI, and TETV…QGRI. Residues Lys-450 and Lys-475 each participate in a glycyl lysine isopeptide (Lys-Gly) (interchain with G-Cter in SUMO2) cross-link. The KH 4 domain maps to 487 to 553; the sequence is KLEAHIRVPS…YACQVAQRKI (67 aa). At Thr-528 the chain carries Phosphothreonine.

This sequence belongs to the RRM IMP/VICKZ family. As to quaternary structure, can form homooligomers and heterooligomers with IGF2BP1 and IGF2BP3 in an RNA-dependent manner. Interacts with IGF2BP1. Interacts with ELAVL1, DHX9, HNRNPU, MATR3 and PABPC1. Expressed in oocytes, spermatogonia and spermatocytes (at protein level).

It is found in the nucleus. Its subcellular location is the cytoplasm. The protein resides in the P-body. The protein localises to the stress granule. Functionally, RNA-binding factor that may recruit target transcripts to cytoplasmic protein-RNA complexes (mRNPs). This transcript 'caging' into mRNPs allows mRNA transport and transient storage. It also modulates the rate and location at which target transcripts encounter the translational apparatus and shields them from endonuclease attacks or microRNA-mediated degradation. Preferentially binds to N6-methyladenosine (m6A)-containing mRNAs and increases their stability. Binds to the 3'-UTR of CD44 mRNA and stabilizes it, hence promotes cell adhesion and invadopodia formation. Binds to beta-actin/ACTB and MYC transcripts. Increases MYC mRNA stability by binding to the coding region instability determinant (CRD) and binding is enhanced by m6A-modification of the CRD. Binds to the 5'-UTR of the insulin-like growth factor 2 (IGF2) mRNAs. The chain is Insulin-like growth factor 2 mRNA-binding protein 3 (Igf2bp3) from Mus musculus (Mouse).